The primary structure comprises 481 residues: UDP-N-acetylmuramoyl-L-alanyl-D-glutamate--L-lysine ligase (481 aa).

Position 42 (S42) interacts with UDP-N-acetyl-alpha-D-muramoyl-L-alanyl-D-glutamate. An ATP-binding site is contributed by 118 to 124 (GTKGKTT). UDP-N-acetyl-alpha-D-muramoyl-L-alanyl-D-glutamate contacts are provided by residues Q158, 160–161 (TT), S187, and R195. K229 carries the N6-carboxylysine modification. The short motif at 404–407 (DDPN) is the L-lysine recognition motif element.

The protein belongs to the MurCDEF family. MurE subfamily. Carboxylation is probably crucial for Mg(2+) binding and, consequently, for the gamma-phosphate positioning of ATP.

It is found in the cytoplasm. The catalysed reaction is UDP-N-acetyl-alpha-D-muramoyl-L-alanyl-D-glutamate + L-lysine + ATP = UDP-N-acetyl-alpha-D-muramoyl-L-alanyl-gamma-D-glutamyl-L-lysine + ADP + phosphate + H(+). It functions in the pathway cell wall biogenesis; peptidoglycan biosynthesis. Its function is as follows. Catalyzes the addition of L-lysine to the nucleotide precursor UDP-N-acetylmuramoyl-L-alanyl-D-glutamate (UMAG) in the biosynthesis of bacterial cell-wall peptidoglycan. The protein is UDP-N-acetylmuramoyl-L-alanyl-D-glutamate--L-lysine ligase of Streptococcus pyogenes serotype M28 (strain MGAS6180).